The chain runs to 331 residues: 6-phosphogluconolactonase (331 aa).

Lys287 carries the N6-acetyllysine modification.

The protein belongs to the cycloisomerase 2 family.

It carries out the reaction 6-phospho-D-glucono-1,5-lactone + H2O = 6-phospho-D-gluconate + H(+). Its pathway is carbohydrate degradation; pentose phosphate pathway; D-ribulose 5-phosphate from D-glucose 6-phosphate (oxidative stage): step 2/3. Catalyzes the hydrolysis of 6-phosphogluconolactone to 6-phosphogluconate. The protein is 6-phosphogluconolactonase of Shigella boydii serotype 18 (strain CDC 3083-94 / BS512).